Here is a 378-residue protein sequence, read N- to C-terminus: Cytochrome b (378 aa).

A run of 4 helical transmembrane segments spans residues 34–54 (FGSL…FLSM), 78–100 (WLLR…CHIG), 113–133 (TWNV…VGYV), and 179–199 (FFSF…VHLL). The heme b site is built by His-84 and His-98. Heme b-binding residues include His-183 and His-197. Residue His-202 coordinates a ubiquinone. 4 helical membrane-spanning segments follow: residues 225–245 (YSTK…IVVL), 289–306 (LGGV…FCLP), 313–342 (KFRS…WIGM), and 350–369 (IFIG…LNPL).

It belongs to the cytochrome b family. In terms of assembly, the main subunits of complex b-c1 are: cytochrome b, cytochrome c1 and the Rieske protein. Requires heme b as cofactor.

It localises to the mitochondrion inner membrane. In terms of biological role, component of the ubiquinol-cytochrome c reductase complex (complex III or cytochrome b-c1 complex) that is part of the mitochondrial respiratory chain. The b-c1 complex mediates electron transfer from ubiquinol to cytochrome c. Contributes to the generation of a proton gradient across the mitochondrial membrane that is then used for ATP synthesis. In Loxocorone allax (Goblet worm), this protein is Cytochrome b (mt:Cyt-b).